We begin with the raw amino-acid sequence, 1827 residues long: Sucrase-isomaltase, intestinal (1827 aa).

At 2–12 (AKRKFSGLEIT) the chain is on the cytoplasmic side. At serine 7 the chain carries Phosphoserine; by PKA. A helical; Signal-anchor for type II membrane protein membrane pass occupies residues 13-32 (LIVLFVIVFIIAIALIAVLA). At 33–1827 (TKTPAVEEVN…LDDPIEISWS (1795 aa)) the chain is on the lumenal side. Positions 39 to 64 (EEVNPSSSTPTTTSTTTSTSGSVSCP) are disordered. Residues 43–64 (PSSSTPTTTSTTTSTSGSVSCP) are compositionally biased toward low complexity. A P-type 1 domain is found at 61 to 110 (VSCPSELNEVVNERINCIPEQSPTQAICAQRNCCWRPWNNSDIPWCFFVD). 3 cysteine pairs are disulfide-bonded: cysteine 63–cysteine 94, cysteine 77–cysteine 93, and cysteine 88–cysteine 106. An N-linked (GlcNAc...) asparagine glycan is attached at asparagine 99. Residues 110 to 1007 (DNHGYNVEGM…DLQLNPTRTR (898 aa)) are isomaltase. Residues aspartate 264 and aspartate 388 each contribute to the substrate site. Sulfotyrosine is present on residues tyrosine 391 and tyrosine 400. N-linked (GlcNAc...) asparagine glycosylation is present at asparagine 455. Residue aspartate 505 is the Nucleophile; for isomaltase activity of the active site. Cysteine 520 and cysteine 545 form a disulfide bridge. Arginine 588 is a substrate binding site. The active-site For isomaltase activity is the aspartate 604. Cysteine 635 and cysteine 646 form a disulfide bridge. Histidine 662 lines the substrate pocket. N-linked (GlcNAc...) asparagine glycosylation is found at asparagine 859, asparagine 896, and asparagine 904. In terms of domain architecture, P-type 2 spans 932–978 (DQTFLESEKITCYPDADIATQEKCTQRGCIWDTNTVNPRAPECYFPK). Residues 1008–1827 (ITLPSEPITN…LDDPIEISWS (820 aa)) form a sucrase region. 6 N-linked (GlcNAc...) asparagine glycosylation sites follow: asparagine 1235, asparagine 1303, asparagine 1325, asparagine 1340, asparagine 1354, and asparagine 1368. Sulfotyrosine is present on residues tyrosine 1382 and tyrosine 1385. The Nucleophile; for sucrase activity role is filled by aspartate 1394. Glutamate 1397 functions as the For sucrase activity in the catalytic mechanism. A glycan (N-linked (GlcNAc...) asparagine) is linked at asparagine 1403. Aspartate 1500 (proton donor; for sucrase activity) is an active-site residue. Residues asparagine 1535, asparagine 1572, asparagine 1748, asparagine 1763, and asparagine 1799 are each glycosylated (N-linked (GlcNAc...) asparagine).

This sequence belongs to the glycosyl hydrolase 31 family. The resulting sucrase and isomaltase subunits stay associated with one another in a complex by non-covalent linkages. In terms of processing, the precursor is proteolytically cleaved when exposed to pancreatic proteases in the intestinal lumen. N- and O-glycosylated. Post-translationally, sulfated.

The protein localises to the apical cell membrane. It catalyses the reaction Hydrolysis of sucrose and maltose by an alpha-D-glucosidase-type action.. The catalysed reaction is Hydrolysis of (1-&gt;6)-alpha-D-glucosidic linkages in some oligosaccharides produced from starch and glycogen by alpha-amylase, and in isomaltose.. Its function is as follows. Plays an important role in the final stage of carbohydrate digestion. Isomaltase activity is specific for both alpha-1,4- and alpha-1,6-oligosaccharides. The chain is Sucrase-isomaltase, intestinal (SI) from Oryctolagus cuniculus (Rabbit).